A 356-amino-acid polypeptide reads, in one-letter code: Protein MGF 360-10L (356 aa).

The ANK repeat unit spans residues 57 to 89 (DLNTALMLATKENNYQLIKMFTDWGADINYGLI). Asn172 is a glycosylation site (N-linked (GlcNAc...) asparagine; by host). The helical transmembrane segment at 249–271 (NFLTIYYCFILGANINLAMIASI) threads the bilayer. 2 N-linked (GlcNAc...) asparagine; by host glycosylation sites follow: Asn352 and Asn353.

This sequence belongs to the asfivirus MGF 360 family.

The protein localises to the host membrane. Plays a role in virus cell tropism, and may be required for efficient virus replication in macrophages. This chain is Protein MGF 360-10L, found in African swine fever virus (isolate Tick/South Africa/Pretoriuskop Pr4/1996) (ASFV).